The chain runs to 693 residues: Tegument protein UL47 (693 aa).

2 disordered regions span residues 1 to 32 and 48 to 126; these read MSAR…DGVG and ELEA…GYLG. The segment covering 48 to 57 has biased composition (acidic residues); sequence ELEALEEMAG. Positions 50–75 are RNA-binding; that stretch reads EALEEMAGDEPPVRRRREGPRARRRR. The Nuclear localization signal motif lies at 63–75; it reads RRRREGPRARRRR. Basic residues predominate over residues 63–75; it reads RRRREGPRARRRR. The short motif at 647–670 is the Nuclear export signal element; sequence SVLGPRVRVVDIMSQFRKLLMGDE.

The protein belongs to the alphaherpesvirinae HHV-1 UL47 family. As to quaternary structure, interacts with US3 kinase. Interacts with UL31 and UL34; these interactions seem important for efficient virion nuclear egress. Interacts with UL41/VHS. In terms of processing, phosphorylated by US3. This phosphorylation is required for proper nuclear localization.

It localises to the virion tegument. It is found in the host nucleus. The protein localises to the host cytoplasm. Tegument protein that can bind to various RNA transcripts. Plays a role in the attenuation of selective viral and cellular mRNA degradation by modulating the activity of host shutoff RNase UL41/VHS. Also plays a role in the primary envelopment of virions in the perinuclear space, probably by interacting with two nuclear egress proteins UL31 and UL34. The protein is Tegument protein UL47 of Homo sapiens (Human).